We begin with the raw amino-acid sequence, 430 residues long: Adenylosuccinate synthetase (430 aa).

GTP contacts are provided by residues Gly-12 to Lys-18 and Gly-40 to Thr-42. Asp-13 functions as the Proton acceptor in the catalytic mechanism. Positions 13 and 40 each coordinate Mg(2+). Residues Asp-13–Lys-16, Asn-38–His-41, Thr-129, Arg-143, Gln-223, Thr-238, and Arg-302 contribute to the IMP site. His-41 functions as the Proton donor in the catalytic mechanism. Thr-298 to Arg-304 is a binding site for substrate. GTP is bound by residues Arg-304, Lys-330–Asp-332, and Ser-412–Gly-414.

Belongs to the adenylosuccinate synthetase family. Homodimer. Mg(2+) is required as a cofactor.

The protein resides in the cytoplasm. It carries out the reaction IMP + L-aspartate + GTP = N(6)-(1,2-dicarboxyethyl)-AMP + GDP + phosphate + 2 H(+). It functions in the pathway purine metabolism; AMP biosynthesis via de novo pathway; AMP from IMP: step 1/2. Its function is as follows. Plays an important role in the de novo pathway of purine nucleotide biosynthesis. Catalyzes the first committed step in the biosynthesis of AMP from IMP. The chain is Adenylosuccinate synthetase from Desulforudis audaxviator (strain MP104C).